The sequence spans 192 residues: NADH-quinone oxidoreductase subunit B (192 aa).

[4Fe-4S] cluster is bound by residues Cys-71, Cys-72, Cys-136, and Cys-166.

The protein belongs to the complex I 20 kDa subunit family. In terms of assembly, NDH-1 is composed of 14 different subunits. Subunits NuoB, C, D, E, F, and G constitute the peripheral sector of the complex. [4Fe-4S] cluster serves as cofactor.

It is found in the cell inner membrane. It catalyses the reaction a quinone + NADH + 5 H(+)(in) = a quinol + NAD(+) + 4 H(+)(out). Functionally, NDH-1 shuttles electrons from NADH, via FMN and iron-sulfur (Fe-S) centers, to quinones in the respiratory chain. Couples the redox reaction to proton translocation (for every two electrons transferred, four hydrogen ions are translocated across the cytoplasmic membrane), and thus conserves the redox energy in a proton gradient. The polypeptide is NADH-quinone oxidoreductase subunit B (Azorhizobium caulinodans (strain ATCC 43989 / DSM 5975 / JCM 20966 / LMG 6465 / NBRC 14845 / NCIMB 13405 / ORS 571)).